Reading from the N-terminus, the 257-residue chain is MKKIALFITASLIAGNTLAAQTYIRNGNIYTHEGQWVAEVGAFGSTDLLKDQDKSYSALLNFGYHGEDLNADLTGINYRFFGNTGDVVNLGTYLTGSGVTYDQDSANSVKGMDKRKATIDLGLNADIALGDGTVSTYFQHDILNENKGYKTGVNYFHVIDLGAVDLVPFAGISYQSSDYNNYYFGVKDKEATAQRKAYHAGGDFSYNLGYKLAYPINDRWEITQTSSYTRLGSDVTNSPIVESANQWLVGATVAYHF.

A signal peptide spans 1–19 (MKKIALFITASLIAGNTLA).

The protein belongs to the MipA/OmpV family.

It is found in the cell outer membrane. This Vibrio anguillarum (Listonella anguillarum) protein is Outer membrane protein Omp26La.